A 456-amino-acid polypeptide reads, in one-letter code: Bifunctional protein GlmU (456 aa).

The tract at residues 1–229 (MLNSAMSVVI…LSEVEGVNNR (229 aa)) is pyrophosphorylase. UDP-N-acetyl-alpha-D-glucosamine-binding positions include 11-14 (LAAG), Lys-25, Gln-76, 81-82 (GT), 103-105 (YGD), Gly-140, Glu-154, Asn-169, and Asn-227. Asp-105 provides a ligand contact to Mg(2+). Residue Asn-227 coordinates Mg(2+). Residues 230–250 (LQLSALERIYQREQADKLLLA) form a linker region. The N-acetyltransferase stretch occupies residues 251 to 456 (GVMLLDPARF…SGWQRPVKKK (206 aa)). 2 residues coordinate UDP-N-acetyl-alpha-D-glucosamine: Arg-333 and Lys-351. Catalysis depends on His-363, which acts as the Proton acceptor. 2 residues coordinate UDP-N-acetyl-alpha-D-glucosamine: Tyr-366 and Asn-377. Residues Ala-380, 386-387 (NY), Ser-405, Ala-423, and Arg-440 contribute to the acetyl-CoA site.

In the N-terminal section; belongs to the N-acetylglucosamine-1-phosphate uridyltransferase family. This sequence in the C-terminal section; belongs to the transferase hexapeptide repeat family. In terms of assembly, homotrimer. Mg(2+) is required as a cofactor.

The protein localises to the cytoplasm. The enzyme catalyses alpha-D-glucosamine 1-phosphate + acetyl-CoA = N-acetyl-alpha-D-glucosamine 1-phosphate + CoA + H(+). It catalyses the reaction N-acetyl-alpha-D-glucosamine 1-phosphate + UTP + H(+) = UDP-N-acetyl-alpha-D-glucosamine + diphosphate. Its pathway is nucleotide-sugar biosynthesis; UDP-N-acetyl-alpha-D-glucosamine biosynthesis; N-acetyl-alpha-D-glucosamine 1-phosphate from alpha-D-glucosamine 6-phosphate (route II): step 2/2. The protein operates within nucleotide-sugar biosynthesis; UDP-N-acetyl-alpha-D-glucosamine biosynthesis; UDP-N-acetyl-alpha-D-glucosamine from N-acetyl-alpha-D-glucosamine 1-phosphate: step 1/1. It functions in the pathway bacterial outer membrane biogenesis; LPS lipid A biosynthesis. Its function is as follows. Catalyzes the last two sequential reactions in the de novo biosynthetic pathway for UDP-N-acetylglucosamine (UDP-GlcNAc). The C-terminal domain catalyzes the transfer of acetyl group from acetyl coenzyme A to glucosamine-1-phosphate (GlcN-1-P) to produce N-acetylglucosamine-1-phosphate (GlcNAc-1-P), which is converted into UDP-GlcNAc by the transfer of uridine 5-monophosphate (from uridine 5-triphosphate), a reaction catalyzed by the N-terminal domain. The sequence is that of Bifunctional protein GlmU from Pectobacterium atrosepticum (strain SCRI 1043 / ATCC BAA-672) (Erwinia carotovora subsp. atroseptica).